A 70-amino-acid polypeptide reads, in one-letter code: Potassium channel toxin kappa-KTx 2.5 (70 aa).

Positions 1–26 (MESSRKSYVLMLFLAFVIMNVCSVSG) are cleaved as a signal peptide. The propeptide occupies 27–42 (EPKDGEIAGFEMEEAR). Cystine bridges form between cysteine 46-cysteine 64 and cysteine 50-cysteine 60.

The protein belongs to the short scorpion toxin superfamily. Potassium channel inhibitor kappa-KTx family. Kappa-KTx 2 subfamily. As to expression, expressed by the venom gland.

The protein resides in the secreted. In terms of biological role, voltage-independently blocks potassium currents on hKv1.1/KCNA1 (IC(50)=217 uM), and hKv1.4/KCNA4 (IC(50)=71 uM) (expressed in CHO cells). The protein is Potassium channel toxin kappa-KTx 2.5 of Opisthacanthus cayaporum (South American scorpion).